A 59-amino-acid chain; its full sequence is UPF0337 protein MM_2677 (59 aa).

2 stretches are compositionally biased toward basic and acidic residues: residues 1-24 (MKEGTKEEMEGKFSKAKGEIKESA) and 33-59 (MEAKGEAEKRKGEAQEKVGKIRKEFEK). Residues 1 to 59 (MKEGTKEEMEGKFSKAKGEIKESAGEMTGDIEMEAKGEAEKRKGEAQEKVGKIRKEFEK) are disordered.

This sequence belongs to the UPF0337 (CsbD) family.

The chain is UPF0337 protein MM_2677 from Methanosarcina mazei (strain ATCC BAA-159 / DSM 3647 / Goe1 / Go1 / JCM 11833 / OCM 88) (Methanosarcina frisia).